The chain runs to 89 residues: Small ribosomal subunit protein uS15 (89 aa).

It belongs to the universal ribosomal protein uS15 family. As to quaternary structure, part of the 30S ribosomal subunit. Forms a bridge to the 50S subunit in the 70S ribosome, contacting the 23S rRNA.

In terms of biological role, one of the primary rRNA binding proteins, it binds directly to 16S rRNA where it helps nucleate assembly of the platform of the 30S subunit by binding and bridging several RNA helices of the 16S rRNA. Functionally, forms an intersubunit bridge (bridge B4) with the 23S rRNA of the 50S subunit in the ribosome. The polypeptide is Small ribosomal subunit protein uS15 (Yersinia enterocolitica serotype O:8 / biotype 1B (strain NCTC 13174 / 8081)).